We begin with the raw amino-acid sequence, 869 residues long: Speckle targeted PIP5K1A-regulated poly(A) polymerase (869 aa).

The Matrin-type zinc-finger motif lies at 16-46 (FRCCLCDVTTANRPSLDAHLKGRKHRDLVQL). One can recognise an RRM domain in the interval 56–128 (RSVFVSGFPR…HGLRVRPREQ (73 aa)). The tract at residues 114–144 (HSLGGHGLRVRPREQKEFQSPASKSPKGVDS) is disordered. Ser-205 is an ATP binding site. 2 residues coordinate Mg(2+): Asp-216 and Asp-218. Residues Asp-216 and Asp-218 each contribute to the UTP site. Disordered stretches follow at residues 226–247 (MEET…LDSA) and 259–335 (CTPA…ASKD). Polar residues-rich tracts occupy residues 266-276 (DSLSPTSVQES) and 283-299 (TPSS…LGSD). Basic and acidic residues predominate over residues 314 to 335 (QEDRKEGKQGKELELAEEASKD). Position 395 (Asn-395) interacts with ATP. Positions 395, 417, 435, and 552 each coordinate UTP. Positions 494–552 (LSSLLAQFFSCVSCLDLSGSLLSLREGRPLMVAEGLPSDLWEGLRLGPMNLQDPFDLSH) constitute a PAP-associated domain. Positions 601 to 869 (SSPSSLLSAK…IPQALKNLLK (269 aa)) are KA1; binds the bulging loops of U6 snRNA but is dispensable for terminal uridylyltransferase activity. Disordered regions lie at residues 640–689 (QGTK…DHSE), 735–757 (MKPE…HPSS), 775–796 (ARRR…TGAE), and 803–822 (RVTQ…PGEP). Residues 671–689 (KSFEEGKEEPQGCAGDHSE) are compositionally biased toward basic and acidic residues. A phosphoserine mark is found at Ser-688 and Ser-744.

It belongs to the DNA polymerase type-B-like family. In terms of assembly, associates with the cleavage and polyadenylation specificity factor (CPSF) complex. Interacts with CPSF1 and CPSF3; the interaction is direct. Interacts with PIP5K1A. The cofactor is Mg(2+). Requires Mn(2+) as cofactor. Post-translationally, phosphorylated by CK1 in the proline-rich (Pro-rich) region.

Its subcellular location is the nucleus. It localises to the nucleolus. The protein resides in the nucleus speckle. The enzyme catalyses RNA(n) + UTP = RNA(n)-3'-uridine ribonucleotide + diphosphate. The catalysed reaction is RNA(n) + ATP = RNA(n)-3'-adenine ribonucleotide + diphosphate. With respect to regulation, adenylyltransferase activity is specifically phosphatidylinositol 4,5-bisphosphate (PtdIns(4,5)P2). Its function is as follows. Poly(A) polymerase that creates the 3'-poly(A) tail of specific pre-mRNAs. Localizes to nuclear speckles together with PIP5K1A and mediates polyadenylation of a select set of mRNAs, such as HMOX1. In addition to polyadenylation, it is also required for the 3'-end cleavage of pre-mRNAs: binds to the 3'UTR of targeted pre-mRNAs and promotes the recruitment and assembly of the CPSF complex on the 3'UTR of pre-mRNAs. In addition to adenylyltransferase activity, also has uridylyltransferase activity. However, the ATP ratio is higher than UTP in cells, suggesting that it functions primarily as a poly(A) polymerase. Acts as a specific terminal uridylyltransferase for U6 snRNA in vitro: responsible for a controlled elongation reaction that results in the restoration of the four 3'-terminal UMP-residues found in newly transcribed U6 snRNA. Not involved in replication-dependent histone mRNA degradation. The sequence is that of Speckle targeted PIP5K1A-regulated poly(A) polymerase (Tut1) from Mus musculus (Mouse).